We begin with the raw amino-acid sequence, 1095 residues long: Putative disease resistance protein At4g11170 (1095 aa).

One can recognise a TIR domain in the interval 9-173 (WRYDVFPSFR…TISKDVLEKL (165 aa)). E84 is an active-site residue. An NB-ARC domain is found at 168 to 454 (DVLEKLNATP…HENYLKQMII (287 aa)). LRR repeat units follow at residues 609–631 (CLVELNMSHSKLKKLWSGVQPLR), 632–654 (NLRTMNLNSSRNLEILPNLMEAT), 655–677 (KLNRLDLGWCESLVELPSSIKNL), 679–701 (HLILLEMSCCKKLEIIPTNINLP), 702–722 (SLEVLHFRYCTRLQTFPEIST), and 723–744 (NIRLLNLIGTAITEVPPSVKYW).

The enzyme catalyses NAD(+) + H2O = ADP-D-ribose + nicotinamide + H(+). This chain is Putative disease resistance protein At4g11170, found in Arabidopsis thaliana (Mouse-ear cress).